The following is a 490-amino-acid chain: Glutamyl-tRNA(Gln) amidotransferase subunit A (490 aa).

Catalysis depends on charge relay system residues K78 and S158. S182 acts as the Acyl-ester intermediate in catalysis.

Belongs to the amidase family. GatA subfamily. Heterotrimer of A, B and C subunits.

The enzyme catalyses L-glutamyl-tRNA(Gln) + L-glutamine + ATP + H2O = L-glutaminyl-tRNA(Gln) + L-glutamate + ADP + phosphate + H(+). Its function is as follows. Allows the formation of correctly charged Gln-tRNA(Gln) through the transamidation of misacylated Glu-tRNA(Gln) in organisms which lack glutaminyl-tRNA synthetase. The reaction takes place in the presence of glutamine and ATP through an activated gamma-phospho-Glu-tRNA(Gln). The polypeptide is Glutamyl-tRNA(Gln) amidotransferase subunit A (Caulobacter sp. (strain K31)).